The chain runs to 387 residues: 4-hydroxy-3-methylbut-2-en-1-yl diphosphate synthase (flavodoxin) (387 aa).

Residues cysteine 280, cysteine 283, cysteine 315, and glutamate 322 each contribute to the [4Fe-4S] cluster site.

This sequence belongs to the IspG family. The cofactor is [4Fe-4S] cluster.

The catalysed reaction is (2E)-4-hydroxy-3-methylbut-2-enyl diphosphate + oxidized [flavodoxin] + H2O + 2 H(+) = 2-C-methyl-D-erythritol 2,4-cyclic diphosphate + reduced [flavodoxin]. Its pathway is isoprenoid biosynthesis; isopentenyl diphosphate biosynthesis via DXP pathway; isopentenyl diphosphate from 1-deoxy-D-xylulose 5-phosphate: step 5/6. Its function is as follows. Converts 2C-methyl-D-erythritol 2,4-cyclodiphosphate (ME-2,4cPP) into 1-hydroxy-2-methyl-2-(E)-butenyl 4-diphosphate. The polypeptide is 4-hydroxy-3-methylbut-2-en-1-yl diphosphate synthase (flavodoxin) (Mycobacterium bovis (strain BCG / Pasteur 1173P2)).